We begin with the raw amino-acid sequence, 314 residues long: 3'-5' exoribonuclease YhaM (314 aa).

Residues 163-279 enclose the HD domain; sequence HVVSMLDLAK…LHYIDNLDAK (117 aa).

Belongs to the YhaM family.

Functionally, shows a 3'-5' exoribonuclease activity. This chain is 3'-5' exoribonuclease YhaM, found in Bacillus anthracis (strain CDC 684 / NRRL 3495).